The following is a 427-amino-acid chain: Trigger factor (427 aa).

The PPIase FKBP-type domain occupies 163-248; sequence GDTVVIDFVG…VHEVKAKEVP (86 aa).

It belongs to the FKBP-type PPIase family. Tig subfamily.

The protein localises to the cytoplasm. The enzyme catalyses [protein]-peptidylproline (omega=180) = [protein]-peptidylproline (omega=0). Its function is as follows. Involved in protein export. Acts as a chaperone by maintaining the newly synthesized protein in an open conformation. Functions as a peptidyl-prolyl cis-trans isomerase. The sequence is that of Trigger factor from Streptococcus equi subsp. zooepidemicus (strain MGCS10565).